The chain runs to 314 residues: Short-chain dehydrogenase/reductase sthC (314 aa).

The span at 1 to 10 (MAPAETTGNV) shows a compositional bias: polar residues. The tract at residues 1–27 (MAPAETTGNVQRPEAGKQSMGSFWTQM) is disordered. 5 residues coordinate NADP(+): V56, K80, D105, N132, and R167. S191 (proton donor) is an active-site residue. Residues Y222 and K226 each coordinate NADP(+). Y222 serves as the catalytic Proton acceptor. K226 acts as the Lowers pKa of active site Tyr in catalysis.

It belongs to the short-chain dehydrogenases/reductases (SDR) family.

The catalysed reaction is dehydroprobetaenone I + AH2 = probetaenone I + A. It carries out the reaction betaenone C + AH2 = betaenone B + A. It participates in mycotoxin biosynthesis. Short-chain dehydrogenase/reductase; part of the gene cluster that mediates the biosynthesis of the phytotoxin stemphyloxin II. The first step of the pathway is the synthesis of dehydroprobetaenone I by the polyketide synthase sthA and the enoyl reductase sthE via condensation of one acetyl-CoA starter unit with 7 malonyl-CoA units and 5 methylations. The C-terminal reductase (R) domain of sthA catalyzes the reductive release of the polyketide chain. Because sthA lacks a designated enoylreductase (ER) domain, the required activity is provided the enoyl reductase sthE. The short-chain dehydrogenase/reductase sthC then catalyzes reduction of dehydroprobetaenone I to probetaenone I. The cytochrome P450 monooxygenase sthF catalyzes successive epoxidation, oxidation (resulting from epoxide opening) and hydroxylation to install a tertiary alcohol in the decaline ring to yield betaenone C from dehydroprobetaenone I and betaenone B from probetaenone I. The FAD-linked oxidoreductase sthB is responsible for the conversion of betaenone C to betaenone A via an intramolecular aldol reaction between C-1 and C-17 to form the bridged tricyclic system in betaenone A. Finally, the cytochrome P450 monooxygenase sthD catalyzes the hydroxylation of C-15 to afford the final metabolite stemphyloxin II. This chain is Short-chain dehydrogenase/reductase sthC, found in Phaeosphaeria nodorum (strain SN15 / ATCC MYA-4574 / FGSC 10173) (Glume blotch fungus).